We begin with the raw amino-acid sequence, 493 residues long: Serine/threonine-protein kinase chk-1 (493 aa).

A Protein kinase domain is found at 26-286 (YRVIRTLGEG…IEQIKTDPWF (261 aa)). ATP is bound by residues 32-40 (LGEGAFGEV) and K56. The Proton acceptor role is filled by D150. The disordered stretch occupies residues 308-348 (DENSPDCNISSTQQADAVSTAKRRHLETPDKVAHVERQNAS). The segment covering 312–324 (PDCNISSTQQADA) has biased composition (polar residues). Over residues 333–344 (LETPDKVAHVER) the composition is skewed to basic and acidic residues.

This sequence belongs to the protein kinase superfamily. CAMK Ser/Thr protein kinase family. NIM1 subfamily.

The protein localises to the cytoplasm. Its subcellular location is the nucleus. The enzyme catalyses L-seryl-[protein] + ATP = O-phospho-L-seryl-[protein] + ADP + H(+). It catalyses the reaction L-threonyl-[protein] + ATP = O-phospho-L-threonyl-[protein] + ADP + H(+). Serine/threonine-protein kinase which is required for checkpoint-mediated cell cycle arrest and activation of DNA repair in response to the presence of DNA damage or unreplicated DNA. May also negatively regulate cell cycle progression during unperturbed cell cycles. Required for checkpoint mediated cell cycle arrest in response to DNA damage in germline cells. Essential for embryogenesis. In Caenorhabditis briggsae, this protein is Serine/threonine-protein kinase chk-1 (chk-1).